Here is a 228-residue protein sequence, read N- to C-terminus: Superoxide dismutase [Mn], mitochondrial (228 aa).

Residues 1–24 constitute a mitochondrion transit peptide; it reads MALRTLVSRRTLATGLGFRQQLRG. His-52, His-100, Asp-189, and His-193 together coordinate Mn(2+).

Belongs to the iron/manganese superoxide dismutase family. In terms of assembly, homotetramer. Mn(2+) serves as cofactor.

The protein localises to the mitochondrion matrix. It catalyses the reaction 2 superoxide + 2 H(+) = H2O2 + O2. Its function is as follows. Destroys superoxide anion radicals which are normally produced within the cells and which are toxic to biological systems. The protein is Superoxide dismutase [Mn], mitochondrial (SODA) of Nicotiana plumbaginifolia (Leadwort-leaved tobacco).